The chain runs to 97 residues: Large ribosomal subunit protein eL21 (97 aa).

Belongs to the eukaryotic ribosomal protein eL21 family.

This chain is Large ribosomal subunit protein eL21, found in Methanosarcina barkeri (strain Fusaro / DSM 804).